A 381-amino-acid chain; its full sequence is Zinc finger CCCH domain-containing protein 61 (381 aa).

Residues 1 to 39 (MDVEHHKSGHISRPTVDIPPRKLLSSAKSPSSVSSPLRD) form a disordered region. Positions 21 to 37 (RKLLSSAKSPSSVSSPL) are enriched in low complexity. 2 consecutive C3H1-type zinc fingers follow at residues 101 to 128 (YTGEVCPEFSRHGDCSRGDECGFAHGVF) and 137 to 159 (YRTEACKDGKHCKRKVCFFAHSP).

Interacts with MARD1/FLZ9 and RD21A via its CCCH zing finger domains.

The protein resides in the cytoplasm. It is found in the stress granule. Its subcellular location is the P-body. This Arabidopsis thaliana (Mouse-ear cress) protein is Zinc finger CCCH domain-containing protein 61.